The chain runs to 119 residues: Large ribosomal subunit protein bL17 (119 aa).

Belongs to the bacterial ribosomal protein bL17 family. Part of the 50S ribosomal subunit. Contacts protein L32.

The polypeptide is Large ribosomal subunit protein bL17 (Psychrobacter sp. (strain PRwf-1)).